Consider the following 809-residue polypeptide: Cyclic nucleotide-gated channel beta-3 (809 aa).

Disordered stretches follow at residues 1–121 (MFKS…PPAA) and 153–178 (GDLS…ESDD). The Cytoplasmic portion of the chain corresponds to 1–218 (MFKSLTKVNK…SIDSYTDRLY (218 aa)). Basic and acidic residues predominate over residues 22 to 31 (QSSRRNEEGS). A compositionally biased stretch (polar residues) spans 32-43 (HPSNQSQQTTAQ). The span at 44–53 (EENKGEEKSL) shows a compositional bias: basic and acidic residues. Polar residues predominate over residues 55–88 (TKSTPVTSEEPHTNIQDKLSKKNSSGDLTTNPDP). A helical transmembrane segment spans residues 219–242 (LLWLLLVTLAYNWNCCFIPLRLVF). At 243–249 (PYQTADN) the chain is on the extracellular side. Residues 250-270 (IHYWLIADIICDIIYLYDMLF) traverse the membrane as a helical segment. Residues 271–299 (IQPRLQFVRGGDIIVDSNELRKHYRTSTK) lie on the Cytoplasmic side of the membrane. The helical transmembrane segment at 300 to 317 (FQLDVASIIPFDICYLFF) threads the bilayer. Residues 318–320 (GFN) lie on the Extracellular side of the membrane. The chain crosses the membrane as a helical span at residues 321 to 335 (PMFRANRMLKYTSFF). The Cytoplasmic segment spans residues 336 to 348 (EFNHHLESIMDKA). The interval 348-447 (AYIYRVIRTT…IGQMRDVIGA (100 aa)) is ion conduction pathway. The helical transmembrane segment at 349–371 (YIYRVIRTTGYLLFILHINACVY) threads the bilayer. Topologically, residues 372–393 (YWASNYEGIGTTRWVYDGEGNE) are extracellular. Helical transmembrane passes span 394 to 420 (YLRC…LFEI) and 421 to 445 (VFQL…RDVI). The segment at 407-410 (TIGG) is selectivity filter. Over 446–809 (GAATANQNYF…TIEVKEKAKQ (364 aa)) the chain is Cytoplasmic. The segment at 450–526 (ANQNYFRACM…SIISKVDLFK (77 aa)) is C-linker. Positions 530 to 646 (TQMIYDMLLR…ILMKKARVLL (117 aa)) are cyclic nucleotide-binding domain. Positions 591, 592, 604, and 605 each coordinate 3',5'-cyclic GMP. The disordered stretch occupies residues 698 to 776 (QAAQKKENSE…PHSVRRTVLP (79 aa)). A compositionally biased stretch (basic and acidic residues) spans 716–755 (NEDKQKENEDKQKENEDKGKENEDKDKGREPEEKPLDRPE).

The protein belongs to the cyclic nucleotide-gated cation channel (TC 1.A.1.5) family. CNGB3 subfamily. Forms heterotetrameric channels composed of CNGA3 and CNGB3 subunits with 3:1 stoichiometry. In terms of tissue distribution, expressed specifically in the retina.

The protein localises to the cell membrane. It catalyses the reaction Ca(2+)(in) = Ca(2+)(out). The catalysed reaction is Na(+)(in) = Na(+)(out). The enzyme catalyses K(+)(in) = K(+)(out). It carries out the reaction NH4(+)(in) = NH4(+)(out). It catalyses the reaction Rb(+)(in) = Rb(+)(out). The catalysed reaction is Li(+)(in) = Li(+)(out). The enzyme catalyses Cs(+)(in) = Cs(+)(out). In terms of biological role, pore-forming subunit of the cone cyclic nucleotide-gated channel. Mediates cone photoresponses at bright light converting transient changes in intracellular cGMP levels into electrical signals. In the dark, cGMP levels are high and keep the channel open enabling a steady inward current carried by Na(+) and Ca(2+) ions that leads to membrane depolarization and neurotransmitter release from synaptic terminals. Upon photon absorption cGMP levels decline leading to channel closure and membrane hyperpolarization that ultimately slows neurotransmitter release and signals the presence of light, the end point of the phototransduction cascade. Conducts cGMP- and cAMP-gated ion currents, with permeability for monovalent and divalent cations. The chain is Cyclic nucleotide-gated channel beta-3 from Homo sapiens (Human).